The following is a 206-amino-acid chain: Ribosomal RNA large subunit methyltransferase E (206 aa).

The S-adenosyl-L-methionine site is built by G60, W62, D80, D96, and D121. The active-site Proton acceptor is K161.

It belongs to the class I-like SAM-binding methyltransferase superfamily. RNA methyltransferase RlmE family.

Its subcellular location is the cytoplasm. It catalyses the reaction uridine(2552) in 23S rRNA + S-adenosyl-L-methionine = 2'-O-methyluridine(2552) in 23S rRNA + S-adenosyl-L-homocysteine + H(+). In terms of biological role, specifically methylates the uridine in position 2552 of 23S rRNA at the 2'-O position of the ribose in the fully assembled 50S ribosomal subunit. This is Ribosomal RNA large subunit methyltransferase E from Hahella chejuensis (strain KCTC 2396).